We begin with the raw amino-acid sequence, 367 residues long: 5-amino-6-(D-ribitylamino)uracil--L-tyrosine 4-hydroxyphenyl transferase (367 aa).

Residues 56–290 (VTYVRNQNIN…MFAVARLFLD (235 aa)) enclose the Radical SAM core domain. [4Fe-4S] cluster-binding residues include Cys70, Cys74, and Cys77.

This sequence belongs to the radical SAM superfamily. CofH family. As to quaternary structure, consists of two subunits, CofG and CofH. Requires [4Fe-4S] cluster as cofactor.

The enzyme catalyses 5-amino-6-(D-ribitylamino)uracil + L-tyrosine + S-adenosyl-L-methionine = 5-amino-5-(4-hydroxybenzyl)-6-(D-ribitylimino)-5,6-dihydrouracil + 2-iminoacetate + 5'-deoxyadenosine + L-methionine + H(+). The protein operates within cofactor biosynthesis; coenzyme F0 biosynthesis. Functionally, catalyzes the radical-mediated synthesis of 5-amino-5-(4-hydroxybenzyl)-6-(D-ribitylimino)-5,6-dihydrouracil from 5-amino-6-(D-ribitylamino)uracil and L-tyrosine. This is 5-amino-6-(D-ribitylamino)uracil--L-tyrosine 4-hydroxyphenyl transferase from Methanoculleus marisnigri (strain ATCC 35101 / DSM 1498 / JR1).